Consider the following 325-residue polypeptide: N-acetyl-gamma-glutamyl-phosphate reductase (325 aa).

The active site involves C135.

This sequence belongs to the NAGSA dehydrogenase family. Type 1 subfamily.

The protein resides in the cytoplasm. The catalysed reaction is N-acetyl-L-glutamate 5-semialdehyde + phosphate + NADP(+) = N-acetyl-L-glutamyl 5-phosphate + NADPH + H(+). It participates in amino-acid biosynthesis; L-arginine biosynthesis; N(2)-acetyl-L-ornithine from L-glutamate: step 3/4. In terms of biological role, catalyzes the NADPH-dependent reduction of N-acetyl-5-glutamyl phosphate to yield N-acetyl-L-glutamate 5-semialdehyde. This is N-acetyl-gamma-glutamyl-phosphate reductase from Flavobacterium johnsoniae (strain ATCC 17061 / DSM 2064 / JCM 8514 / BCRC 14874 / CCUG 350202 / NBRC 14942 / NCIMB 11054 / UW101) (Cytophaga johnsonae).